The chain runs to 143 residues: Transcriptional regulator MraZ (143 aa).

SpoVT-AbrB domains follow at residues 5–47 and 76–119; these read EYQH…PLNE and ATEC…SDER.

It belongs to the MraZ family. As to quaternary structure, forms oligomers.

It is found in the cytoplasm. Its subcellular location is the nucleoid. This chain is Transcriptional regulator MraZ, found in Enterococcus faecalis (strain ATCC 700802 / V583).